The sequence spans 551 residues: Putative transport protein CGSHiEE_03135 (551 aa).

A run of 5 helical transmembrane segments spans residues 4–24, 28–48, 65–85, 95–115, and 157–177; these read IAITISLLALVAVIGLWIGHW, GVGLGIGGVLFGGIIVAHFTD, FGLILFVYTIGIQVGPGFFSS, AFAILIIVLGSIAVVLVHKIA, and VSYAMAYPFGICGILLAMWLI. RCK C-terminal domains follow at residues 191–275 and 277–360; these read RFNA…IIGY and VDAP…VIGN. A run of 6 helical transmembrane segments spans residues 370–390, 402–424, 438–458, 463–483, 492–512, and 529–549; these read MLPVFIGIGLGVLVGSIPFYI, AGGPLVVVLILARIGTIGKLYWF, IVLFLAVVGLKSGGSFFDTLV, LEWMGYGIFITFVPLIIAGTI, YLTICGLLAGSMTDPPALAFA, and VYPLVMFLRIMSPQLLAVLLW.

It belongs to the AAE transporter (TC 2.A.81) family. YidE subfamily.

The protein localises to the cell membrane. In Haemophilus influenzae (strain PittEE), this protein is Putative transport protein CGSHiEE_03135.